Reading from the N-terminus, the 468-residue chain is RUS family member 1 (468 aa).

Position 2 is an N-acetylalanine (alanine 2). Threonine 49 bears the Phosphothreonine mark. Residues 247-267 (LLMLPLVSGCPGFSLGCFFFL) form a helical membrane-spanning segment.

It belongs to the RUS1 family.

It localises to the membrane. This chain is RUS family member 1, found in Homo sapiens (Human).